The chain runs to 639 residues: ATP-dependent rRNA helicase spb4 (639 aa).

A Q motif motif is present at residues 14–42; sequence WDAVTPPLSEWVLEAMSSMGFARMTPVQA. One can recognise a Helicase ATP-binding domain in the interval 45–249; the sequence is IPLFMAHKDV…RVGLRNPVKI (205 aa). Position 58–65 (58–65) interacts with ATP; the sequence is AVTGSGKT. The DEAD box signature appears at 197–200; that stretch reads DEAD. Residues 283–437 form the Helicase C-terminal domain; it reads ALKNILSSVQ…SISFSDADAT (155 aa). 2 disordered regions span residues 531–601 and 620–639; these read RKEL…ETKE and AAKAETAKAGGEDEEFKGFD. Positions 561–624 form a coiled coil; the sequence is QNAENKNKKL…RFRQAAAKAE (64 aa). Positions 577-601 are enriched in basic and acidic residues; the sequence is KLKQEKTKWENMTEEERQKARETKE.

Belongs to the DEAD box helicase family. DDX55/SPB4 subfamily. Component of pre-60S ribosomal complexes.

Its subcellular location is the nucleus. The protein localises to the nucleolus. The catalysed reaction is ATP + H2O = ADP + phosphate + H(+). Its function is as follows. ATP-binding RNA helicase involved in the biogenesis of 60S ribosomal subunits. Binds 90S pre-ribosomal particles and dissociates from pre-60S ribosomal particles after processing of 27SB pre-rRNA. Required for the normal formation of 18S rRNA through the processing of pre-rRNAs at sites A0, A1 and A2, and the normal formation of 25S and 5.8S rRNAs through the processing of pre-rRNAs at sites C1 and C2. The chain is ATP-dependent rRNA helicase spb4 from Aspergillus clavatus (strain ATCC 1007 / CBS 513.65 / DSM 816 / NCTC 3887 / NRRL 1 / QM 1276 / 107).